Reading from the N-terminus, the 102-residue chain is Large ribosomal subunit protein uL24 (102 aa).

Positions 1 to 22 (MHVKKGDTVQVMSGKDKGKQGV) are disordered.

This sequence belongs to the universal ribosomal protein uL24 family. As to quaternary structure, part of the 50S ribosomal subunit.

Functionally, one of two assembly initiator proteins, it binds directly to the 5'-end of the 23S rRNA, where it nucleates assembly of the 50S subunit. In terms of biological role, one of the proteins that surrounds the polypeptide exit tunnel on the outside of the subunit. This Exiguobacterium sp. (strain ATCC BAA-1283 / AT1b) protein is Large ribosomal subunit protein uL24.